Reading from the N-terminus, the 164-residue chain is Peptidyl-prolyl cis-trans isomerase A (164 aa).

Residue Met-1 is modified to N-acetylmethionine. An N-acetylvaline; in Peptidyl-prolyl cis-trans isomerase A, N-terminally processed modification is found at Val-2. The PPIase cyclophilin-type domain occupies 7-163 (FFDISADGEP…KKITISDCGQ (157 aa)). Residue Lys-28 is modified to N6-acetyllysine; alternate. A Glycyl lysine isopeptide (Lys-Gly) (interchain with G-Cter in SUMO2); alternate cross-link involves residue Lys-28. Lys-28 is covalently cross-linked (Glycyl lysine isopeptide (Lys-Gly) (interchain with G-Cter in ubiquitin); alternate). Position 44 is an N6-acetyllysine (Lys-44). Residue Ser-77 is modified to Phosphoserine. An N6-acetyllysine; alternate modification is found at Lys-82. A Glycyl lysine isopeptide (Lys-Gly) (interchain with G-Cter in SUMO2); alternate cross-link involves residue Lys-82. Thr-93 is subject to Phosphothreonine. N-linked (GlcNAc...) asparagine glycosylation is present at Asn-108. Lys-125, Lys-131, and Lys-133 each carry N6-acetyllysine.

It belongs to the cyclophilin-type PPIase family. PPIase A subfamily. In terms of assembly, interacts with protein phosphatase PPP3CA/calcineurin A. Interacts with PRPF19 isoform 2 (via N-terminus). Interacts with isoform 2 of BSG/CD147. Interacts with FOXO1; the interaction promotes FOXO1 dephosphorylation, nuclear accumulation and transcriptional activity. Interacts with integrin ITGA2B:ITGB3; the interaction is ROS and peptidyl-prolyl cis-trans isomerase (PPIase) activity-dependent and is increased in the presence of thrombin. Interacts with MAP3K5. Interacts with TARDBP; the interaction is dependent on the RNA-binding activity of TARDBP and the PPIase activity of PPIA/CYPA and the acetylation of PPIA/CYPA at Lys-125 favors the interaction. Interacts with HNRNPA1, HNRNPA2B1, HNRNPC, RBMX, HNRNPK and HNRNPM. In terms of processing, acetylation at Lys-125 markedly inhibits catalysis of cis to trans isomerization. PPIA acetylation also antagonizes the immunosuppressive effects of cyclosporine by inhibiting the sequential steps of cyclosporine binding and calcineurin inhibition. Acetylation at Lys-125 favors the interaction with TARDBP.

Its subcellular location is the cytoplasm. It localises to the secreted. The protein resides in the nucleus. The enzyme catalyses [protein]-peptidylproline (omega=180) = [protein]-peptidylproline (omega=0). Binds cyclosporin A (CsA). CsA mediates some of its effects via an inhibitory action on PPIase. Its function is as follows. Catalyzes the cis-trans isomerization of proline imidic peptide bonds in oligopeptides. Exerts a strong chemotactic effect on leukocytes partly through activation of one of its membrane receptors BSG/CD147, initiating a signaling cascade that culminates in MAPK/ERK activation. Activates endothelial cells (ECs) in a proinflammatory manner by stimulating activation of NF-kappa-B and ERK, JNK and p38 MAP-kinases and by inducing expression of adhesion molecules including SELE and VCAM1. Induces apoptosis in ECs by promoting the FOXO1-dependent expression of CCL2 and BCL2L11 which are involved in EC chemotaxis and apoptosis. In response to oxidative stress, initiates proapoptotic and antiapoptotic signaling in ECs via activation of NF-kappa-B and AKT1 and up-regulation of antiapoptotic protein BCL2. Negatively regulates MAP3K5/ASK1 kinase activity, autophosphorylation and oxidative stress-induced apoptosis mediated by MAP3K5/ASK1. Necessary for the assembly of TARDBP in heterogeneous nuclear ribonucleoprotein (hnRNP) complexes and regulates TARDBP binding to RNA UG repeats and TARDBP-dependent expression of HDAC6, ATG7 and VCP which are involved in clearance of protein aggregates. Plays an important role in platelet activation and aggregation. Regulates calcium mobilization and integrin ITGA2B:ITGB3 bidirectional signaling via increased ROS production as well as by facilitating the interaction between integrin and the cell cytoskeleton. Binds heparan sulfate glycosaminoglycans. The protein is Peptidyl-prolyl cis-trans isomerase A (PPIA) of Cricetulus griseus (Chinese hamster).